A 272-amino-acid chain; its full sequence is Alkaline ceramidase (272 aa).

Transmembrane regions (helical) follow at residues Phe34–Leu54 and Val61–Tyr81. Residue His83 participates in Zn(2+) binding. The next 4 membrane-spanning stretches (helical) occupy residues Leu96–Phe116, Leu124–Leu144, Leu148–Gly168, and Ile183–Phe203. Zn(2+) contacts are provided by His213 and His217. Residues Ala214–Ile234 form a helical membrane-spanning segment. A glycan (N-linked (GlcNAc...) asparagine) is linked at Asn256.

This sequence belongs to the alkaline ceramidase family. The cofactor is Zn(2+).

Its subcellular location is the membrane. It catalyses the reaction an N-acyl-sphingoid base + H2O = a sphingoid base + a fatty acid. The enzyme catalyses an N-acylsphing-4-enine + H2O = sphing-4-enine + a fatty acid. The catalysed reaction is an N-acyl-15-methylhexadecasphing-4-enine + H2O = 15-methylhexadecasphing-4-enine + a fatty acid. The protein operates within lipid metabolism; sphingolipid metabolism. Functionally, hydrolyzes the sphingolipid ceramide into sphingoid base and free fatty acid. C.elegans contain specific sphingoid bases, which are unique or different in structure compared to the sphingoid bases found in other animals. Two examples of these distinctive compounds are: 15-methylhexadecasphinganine and 15-methylhexadecasphing-4-enine. The polypeptide is Alkaline ceramidase (Caenorhabditis elegans).